The chain runs to 459 residues: Trigger factor (459 aa).

A PPIase FKBP-type domain is found at 166–245 (GDFANIDLTA…VNSVKAEELP (80 aa)).

It belongs to the FKBP-type PPIase family. Tig subfamily.

It is found in the cytoplasm. It carries out the reaction [protein]-peptidylproline (omega=180) = [protein]-peptidylproline (omega=0). Involved in protein export. Acts as a chaperone by maintaining the newly synthesized protein in an open conformation. Functions as a peptidyl-prolyl cis-trans isomerase. The sequence is that of Trigger factor from Bifidobacterium longum (strain DJO10A).